We begin with the raw amino-acid sequence, 220 residues long: Deoxyribose-phosphate aldolase (220 aa).

The active-site Proton donor/acceptor is the Asp89. Lys151 serves as the catalytic Schiff-base intermediate with acetaldehyde. The Proton donor/acceptor role is filled by Lys180.

This sequence belongs to the DeoC/FbaB aldolase family. DeoC type 1 subfamily.

The protein resides in the cytoplasm. The catalysed reaction is 2-deoxy-D-ribose 5-phosphate = D-glyceraldehyde 3-phosphate + acetaldehyde. The protein operates within carbohydrate degradation; 2-deoxy-D-ribose 1-phosphate degradation; D-glyceraldehyde 3-phosphate and acetaldehyde from 2-deoxy-alpha-D-ribose 1-phosphate: step 2/2. Its function is as follows. Catalyzes a reversible aldol reaction between acetaldehyde and D-glyceraldehyde 3-phosphate to generate 2-deoxy-D-ribose 5-phosphate. The protein is Deoxyribose-phosphate aldolase of Streptococcus sanguinis (strain SK36).